A 317-amino-acid chain; its full sequence is tRNA dimethylallyltransferase (317 aa).

14–21 (GPTASGKT) contributes to the ATP binding site. 16–21 (TASGKT) is a substrate binding site. Interaction with substrate tRNA stretches follow at residues 39–42 (DSAL) and 163–167 (QRIQR).

This sequence belongs to the IPP transferase family. As to quaternary structure, monomer. Mg(2+) is required as a cofactor.

The catalysed reaction is adenosine(37) in tRNA + dimethylallyl diphosphate = N(6)-dimethylallyladenosine(37) in tRNA + diphosphate. Its function is as follows. Catalyzes the transfer of a dimethylallyl group onto the adenine at position 37 in tRNAs that read codons beginning with uridine, leading to the formation of N6-(dimethylallyl)adenosine (i(6)A). This is tRNA dimethylallyltransferase from Stenotrophomonas maltophilia (strain R551-3).